Reading from the N-terminus, the 353-residue chain is Probable arabinan endo-1,5-alpha-L-arabinosidase B (353 aa).

The N-terminal stretch at Met1 to Cys16 is a signal peptide. Catalysis depends on Asp39, which acts as the Proton acceptor. An N-linked (GlcNAc...) asparagine glycan is attached at Asn194. Residues His202–Ser227 are disordered. Residue Glu233 is the Proton donor of the active site.

It belongs to the glycosyl hydrolase 43 family.

The protein resides in the secreted. The catalysed reaction is Endohydrolysis of (1-&gt;5)-alpha-arabinofuranosidic linkages in (1-&gt;5)-arabinans.. It functions in the pathway glycan metabolism; L-arabinan degradation. Functionally, endo-1,5-alpha-L-arabinanase involved in degradation of pectin. Its preferred substrate is linear 1,5-alpha-L-arabinan. The polypeptide is Probable arabinan endo-1,5-alpha-L-arabinosidase B (abnB) (Aspergillus oryzae (strain ATCC 42149 / RIB 40) (Yellow koji mold)).